Reading from the N-terminus, the 180-residue chain is Large ribosomal subunit protein uL5 (180 aa).

This sequence belongs to the universal ribosomal protein uL5 family. As to quaternary structure, part of the 50S ribosomal subunit; part of the 5S rRNA/L5/L18/L25 subcomplex. Contacts the 5S rRNA and the P site tRNA. Forms a bridge to the 30S subunit in the 70S ribosome.

Functionally, this is one of the proteins that bind and probably mediate the attachment of the 5S RNA into the large ribosomal subunit, where it forms part of the central protuberance. In the 70S ribosome it contacts protein S13 of the 30S subunit (bridge B1b), connecting the 2 subunits; this bridge is implicated in subunit movement. Contacts the P site tRNA; the 5S rRNA and some of its associated proteins might help stabilize positioning of ribosome-bound tRNAs. The protein is Large ribosomal subunit protein uL5 of Polynucleobacter necessarius subsp. necessarius (strain STIR1).